The chain runs to 382 residues: Serine/threonine-protein kinase US3 homolog (382 aa).

Positions Met-1 to Thr-10 are enriched in basic and acidic residues. The disordered stretch occupies residues Met-1–Asp-75. Residues Trp-12–Asp-24 show a composition bias toward polar residues. Over residues Ala-45–Asp-75 the composition is skewed to acidic residues. The Protein kinase domain maps to Tyr-93–Phe-379. ATP contacts are provided by residues Leu-99–Val-107 and Lys-122. Asp-207 (proton acceptor) is an active-site residue.

Belongs to the protein kinase superfamily. Ser/Thr protein kinase family. In terms of processing, phosphorylated by protein 49; this phosphorylation regulates subsequent phosphorylation of proteins 26 and 29 by US3 homolog. Autophosphorylated.

It localises to the host cytoplasm. The protein resides in the host nucleus. The catalysed reaction is L-seryl-[protein] + ATP = O-phospho-L-seryl-[protein] + ADP + H(+). It carries out the reaction L-threonyl-[protein] + ATP = O-phospho-L-threonyl-[protein] + ADP + H(+). Its function is as follows. Multifunctional serine/threonine kinase that plays a role in several processes including egress of virus particles from the nucleus, modulation of the actin cytoskeleton and inhibition of apoptosis. Phosphorylates protein 26 and 29, two critical regulators of capsid budding from nucleus to endoplasmic reticulum, thereby facilitating virion egress. Modulates and redistributes host components of the nuclear envelope, including LMNA, emerin/EMD and the nuclear matrix protein MATR3. Phosphorylates envelope glycoprotein B (gB), probably to direct it to the cell surface. Promotes virus intracellular spread by restructuring host cell cytoskeleton. Blocks host apoptosis to extend cell survival and allow efficient viral replication. Promotes viral gene expression by phosphorylating host HDAC2 to reduce viral genome silencing. This chain is Serine/threonine-protein kinase US3 homolog, found in Equine herpesvirus 1 (strain Ab4p) (EHV-1).